The following is a 193-amino-acid chain: Large ribosomal subunit protein eL19B (193 aa).

The segment at 157–179 is disordered; that stretch reads EQQDARRARAKAARQRRAKAVEE. The span at 164-174 shows a compositional bias: basic residues; that stretch reads ARAKAARQRRA.

Belongs to the eukaryotic ribosomal protein eL19 family. As to quaternary structure, component of the large ribosomal subunit (LSU). Mature yeast ribosomes consist of a small (40S) and a large (60S) subunit. The 40S small subunit contains 1 molecule of ribosomal RNA (18S rRNA) and at least 33 different proteins. The large 60S subunit contains 3 rRNA molecules (25S, 5.8S and 5S rRNA) and at least 46 different proteins. eL19 lies in close proximity to the binding site for eukaryotic initiation factor eIF4G.

It is found in the cytoplasm. Its function is as follows. Component of the ribosome, a large ribonucleoprotein complex responsible for the synthesis of proteins in the cell. The small ribosomal subunit (SSU) binds messenger RNAs (mRNAs) and translates the encoded message by selecting cognate aminoacyl-transfer RNA (tRNA) molecules. The large subunit (LSU) contains the ribosomal catalytic site termed the peptidyl transferase center (PTC), which catalyzes the formation of peptide bonds, thereby polymerizing the amino acids delivered by tRNAs into a polypeptide chain. The nascent polypeptides leave the ribosome through a tunnel in the LSU and interact with protein factors that function in enzymatic processing, targeting, and the membrane insertion of nascent chains at the exit of the ribosomal tunnel. eL19 may play a role in the last stages of translation initiation, in particular subunit joining and shedding/releasing factors. This chain is Large ribosomal subunit protein eL19B (rpl1902), found in Schizosaccharomyces pombe (strain 972 / ATCC 24843) (Fission yeast).